A 120-amino-acid polypeptide reads, in one-letter code: Large ribosomal subunit protein uL18 (120 aa).

The protein belongs to the universal ribosomal protein uL18 family. As to quaternary structure, part of the 50S ribosomal subunit; part of the 5S rRNA/L5/L18/L25 subcomplex. Contacts the 5S and 23S rRNAs.

Its function is as follows. This is one of the proteins that bind and probably mediate the attachment of the 5S RNA into the large ribosomal subunit, where it forms part of the central protuberance. This is Large ribosomal subunit protein uL18 from Allorhizobium ampelinum (strain ATCC BAA-846 / DSM 112012 / S4) (Agrobacterium vitis (strain S4)).